We begin with the raw amino-acid sequence, 430 residues long: Agropine synthesis reductase (430 aa).

Position 203 to 227 (203 to 227 (LISGPSRGIGKAIAENLIAHGYRMS)) interacts with NAD(+). Residue Ser333 participates in substrate binding. The active-site Proton acceptor is Tyr346.

The protein belongs to the short-chain dehydrogenases/reductases (SDR) family.

It participates in opine metabolism; mannopine biosynthesis. Reduces deoxy-fructosyl-glutamine to mannopine. In Rhizobium rhizogenes (Agrobacterium rhizogenes), this protein is Agropine synthesis reductase (mas1).